The chain runs to 462 residues: Cysteine--tRNA ligase (462 aa).

Residue Cys28 participates in Zn(2+) binding. The short motif at 30–40 is the 'HIGH' region element; sequence VTAYDLCHIGH. The Zn(2+) site is built by Cys209, His234, and Glu238. The 'KMSKS' region motif lies at 266–270; it reads KMSKS. Lys269 is an ATP binding site.

This sequence belongs to the class-I aminoacyl-tRNA synthetase family. Monomer. Requires Zn(2+) as cofactor.

Its subcellular location is the cytoplasm. It carries out the reaction tRNA(Cys) + L-cysteine + ATP = L-cysteinyl-tRNA(Cys) + AMP + diphosphate. This is Cysteine--tRNA ligase from Baumannia cicadellinicola subsp. Homalodisca coagulata.